Here is a 51-residue protein sequence, read N- to C-terminus: Large ribosomal subunit protein eL39 (51 aa).

It belongs to the eukaryotic ribosomal protein eL39 family.

In Methanobrevibacter smithii (strain ATCC 35061 / DSM 861 / OCM 144 / PS), this protein is Large ribosomal subunit protein eL39.